The chain runs to 215 residues: Large ribosomal subunit protein uL3 (215 aa).

A disordered region spans residues 124–164 (KRHGFSRGPMTHGSKNHREPGSTGAGTTPGRIYPGKRMAGR).

Belongs to the universal ribosomal protein uL3 family. In terms of assembly, part of the 50S ribosomal subunit. Forms a cluster with proteins L14 and L19.

One of the primary rRNA binding proteins, it binds directly near the 3'-end of the 23S rRNA, where it nucleates assembly of the 50S subunit. The protein is Large ribosomal subunit protein uL3 of Synechococcus sp. (strain RCC307).